A 462-amino-acid chain; its full sequence is Glycine--tRNA ligase (462 aa).

Residues arginine 94 and glutamate 143 each coordinate substrate. Residues 175 to 177 (RNE), 185 to 190 (FRTCEF), 259 to 260 (EL), and 308 to 311 (GLTR) contribute to the ATP site. 190–194 (FEQME) contacts substrate. Position 304–308 (304–308 (ETSAG)) interacts with substrate.

It belongs to the class-II aminoacyl-tRNA synthetase family. As to quaternary structure, homodimer.

It is found in the cytoplasm. It catalyses the reaction tRNA(Gly) + glycine + ATP = glycyl-tRNA(Gly) + AMP + diphosphate. Catalyzes the attachment of glycine to tRNA(Gly). The polypeptide is Glycine--tRNA ligase (Treponema pallidum (strain Nichols)).